The following is a 115-amino-acid chain: Large ribosomal subunit protein bL20 (115 aa).

It belongs to the bacterial ribosomal protein bL20 family.

In terms of biological role, binds directly to 23S ribosomal RNA and is necessary for the in vitro assembly process of the 50S ribosomal subunit. It is not involved in the protein synthesizing functions of that subunit. In Chlorobium phaeobacteroides (strain DSM 266 / SMG 266 / 2430), this protein is Large ribosomal subunit protein bL20.